Reading from the N-terminus, the 189-residue chain is Elongation factor P (189 aa).

The protein belongs to the elongation factor P family.

Its subcellular location is the cytoplasm. The protein operates within protein biosynthesis; polypeptide chain elongation. Functionally, involved in peptide bond synthesis. Stimulates efficient translation and peptide-bond synthesis on native or reconstituted 70S ribosomes in vitro. Probably functions indirectly by altering the affinity of the ribosome for aminoacyl-tRNA, thus increasing their reactivity as acceptors for peptidyl transferase. In Rhizobium johnstonii (strain DSM 114642 / LMG 32736 / 3841) (Rhizobium leguminosarum bv. viciae), this protein is Elongation factor P.